A 200-amino-acid chain; its full sequence is 3-isopropylmalate dehydratase small subunit (200 aa).

The protein belongs to the LeuD family. LeuD type 1 subfamily. Heterodimer of LeuC and LeuD.

It catalyses the reaction (2R,3S)-3-isopropylmalate = (2S)-2-isopropylmalate. Its pathway is amino-acid biosynthesis; L-leucine biosynthesis; L-leucine from 3-methyl-2-oxobutanoate: step 2/4. Its function is as follows. Catalyzes the isomerization between 2-isopropylmalate and 3-isopropylmalate, via the formation of 2-isopropylmaleate. The protein is 3-isopropylmalate dehydratase small subunit of Actinobacillus pleuropneumoniae serotype 7 (strain AP76).